Consider the following 87-residue polypeptide: Defensin alpha-like protein 1 (87 aa).

An N-terminal signal peptide occupies residues 1 to 19; the sequence is MKTLILLSALVLLALQVQA. A propeptide spanning residues 20–56 is cleaved from the precursor; that stretch reads DPIQEAEEETKTEEQPADEDQDVSVSFEGPEASAVQD. Residues 23–41 are compositionally biased toward acidic residues; the sequence is QEAEEETKTEEQPADEDQD. Positions 23–43 are disordered; that stretch reads QEAEEETKTEEQPADEDQDVS.

Belongs to the alpha-defensin family. Antiparallel homodimer; disulfide-linked. In terms of tissue distribution, specifically expressed in small intestine (jejunum and ileum). Probably expressed by Paneth cells at the base of intestinal crypts. Coexpressed with MMP7 in small intestine.

It is found in the secreted. Its function is as follows. Intestinal defense peptide. Has potent antibacterial activity against Gram-negative bacteria E.coli O157:H7, S.typhimurium DT104, and K.pneumoniae; and against Gram-positive bacteria S.aureus, methicillin-resistant S.aureus and L.monocytogenes. Remains active in the presence of NaCl and Mg(2+). Probably functions by disrupting bacterial membrane integrity. However, does not show cytotoxic activity towards human intestinal cells. This Rattus norvegicus (Rat) protein is Defensin alpha-like protein 1.